Consider the following 55-residue polypeptide: Large ribosomal subunit protein bL32c (55 aa).

The segment at 1–24 (MAVPKKRTSKSKKNARKANWKRKG) is disordered.

It belongs to the bacterial ribosomal protein bL32 family.

The protein resides in the plastid. It is found in the chloroplast. This chain is Large ribosomal subunit protein bL32c, found in Phaeodactylum tricornutum (strain CCAP 1055/1).